Here is a 658-residue protein sequence, read N- to C-terminus: UvrABC system protein B (658 aa).

The 392-residue stretch at glutamine 25–arginine 416 folds into the Helicase ATP-binding domain. Residue glycine 38–threonine 45 coordinates ATP. Residues histidine 91–isoleucine 114 carry the Beta-hairpin motif. In terms of domain architecture, Helicase C-terminal spans alanine 433–serine 607. One can recognise a UVR domain in the interval glutamate 623–methionine 658.

This sequence belongs to the UvrB family. Forms a heterotetramer with UvrA during the search for lesions. Interacts with UvrC in an incision complex.

The protein localises to the cytoplasm. In terms of biological role, the UvrABC repair system catalyzes the recognition and processing of DNA lesions. A damage recognition complex composed of 2 UvrA and 2 UvrB subunits scans DNA for abnormalities. Upon binding of the UvrA(2)B(2) complex to a putative damaged site, the DNA wraps around one UvrB monomer. DNA wrap is dependent on ATP binding by UvrB and probably causes local melting of the DNA helix, facilitating insertion of UvrB beta-hairpin between the DNA strands. Then UvrB probes one DNA strand for the presence of a lesion. If a lesion is found the UvrA subunits dissociate and the UvrB-DNA preincision complex is formed. This complex is subsequently bound by UvrC and the second UvrB is released. If no lesion is found, the DNA wraps around the other UvrB subunit that will check the other stand for damage. The sequence is that of UvrABC system protein B from Helicobacter hepaticus (strain ATCC 51449 / 3B1).